We begin with the raw amino-acid sequence, 350 residues long: MSRVQTVLGSITPNLLGRTLTHEHVALDFEHFYKPPPADFENELRQKIKMSTLGYVRLYPYSSRENLRFNDEEALEAVRQDVLLYKKHGGGAIVENSTYGLKPNLEFIVDLAKTTGVHFIAGTGHYIHATQDATHRNLTVEQMTDMYSKDILTGIDVNGRIVKCGFIGEVASVYPVQEFERHALLAAGEIQEVLGCGVSLHPHRVSKAPFEIMRLYLEAGGRANKCVMSHLDRTIFDMDELLEFAKLGCYLQYDLFGTESSYYQLNATVDMISDGQRIENIMKLINEGLVDRLLMSHDIHTKHRLTSYGGHGYHHIHMNILPRMFQRGVTLEQVEQMTVTNPANWLSFNA.

Residues His-22, His-24, Glu-169, His-201, His-230, and Asp-298 each contribute to the a divalent metal cation site.

Belongs to the metallo-dependent hydrolases superfamily. Phosphotriesterase family. Requires a divalent metal cation as cofactor.

The chain is Phosphotriesterase-related protein from Drosophila mojavensis (Fruit fly).